A 424-amino-acid polypeptide reads, in one-letter code: MESAPSGGLLALIIISIILLACISAVVSAYETAITSITSYKWSNYVKTHNKQKKLTTKIVNHFQKNYSACLITILVANNIVAILVSNILFLALDQSIKNPAISSALNLLISGVLLLMLCEITPKTLARINIIRVLVYFAVVVYFFYILFWPITKLASIIFAKYEKAPPVSRRDVYFFIDEIEQNGLFTKEDGQLIKRTLIFDQVLVDQIMIKWNRVVYCYEGDPVKTIKEKFLHGQFSRMPVLDQTSNEVVGFIHLKDLFSSLEKSNEPFVLQELLYPAVLVSNTTPIKQALRQMRLHRAHLAVVQDKHHHTIGIVSMEDIIEELVGEIYDEHDEVEAVQTLDNNTWLVLPNVKAAFFFNKWIKRDLVKSKNMTIQRYLASFENDGLNTQNKLETPWFIAEAIVDSENPEQIRYEIRKKSDVVD.

A CNNM transmembrane domain is found at S6–D191. The next 4 membrane-spanning stretches (helical) occupy residues G7–V27, L71–L91, A101–I121, and L135–L155. 2 consecutive CBS domains span residues M210–F270 and L275–E335.

It belongs to the UPF0053 family.

The protein resides in the cell membrane. The protein is UPF0053 protein MG146 homolog of Mycoplasma pneumoniae (strain ATCC 29342 / M129 / Subtype 1) (Mycoplasmoides pneumoniae).